Consider the following 615-residue polypeptide: ATP-dependent zinc metalloprotease FtsH 2 (615 aa).

The Cytoplasmic portion of the chain corresponds to 1 to 7 (MNEPNRN). The chain crosses the membrane as a helical span at residues 8 to 28 (FFWIFFLILGIFWLQSVWFGS). Over 29–99 (RTVQQIPYSQ…VTYRREIENT (71 aa)) the chain is Periplasmic. A helical transmembrane segment spans residues 100–120 (FFRDLLSWVVPALIFVAVFLY). Residues 121–615 (FSRKFAEKGG…APQRERDLSV (495 aa)) lie on the Cytoplasmic side of the membrane. 195–202 (GPPGTGKT) serves as a coordination point for ATP. Histidine 418 provides a ligand contact to Zn(2+). Residue glutamate 419 is part of the active site. Zn(2+) contacts are provided by histidine 422 and aspartate 495.

The protein in the central section; belongs to the AAA ATPase family. It in the C-terminal section; belongs to the peptidase M41 family. Homohexamer. It depends on Zn(2+) as a cofactor.

The protein resides in the cell inner membrane. Its function is as follows. Acts as a processive, ATP-dependent zinc metallopeptidase for both cytoplasmic and membrane proteins. Plays a role in the quality control of integral membrane proteins. The polypeptide is ATP-dependent zinc metalloprotease FtsH 2 (Bdellovibrio bacteriovorus (strain ATCC 15356 / DSM 50701 / NCIMB 9529 / HD100)).